Consider the following 468-residue polypeptide: UDP-N-acetylmuramate--L-alanine ligase (468 aa).

114–120 serves as a coordination point for ATP; the sequence is GTHGKTT.

It belongs to the MurCDEF family.

The protein resides in the cytoplasm. It catalyses the reaction UDP-N-acetyl-alpha-D-muramate + L-alanine + ATP = UDP-N-acetyl-alpha-D-muramoyl-L-alanine + ADP + phosphate + H(+). It functions in the pathway cell wall biogenesis; peptidoglycan biosynthesis. Cell wall formation. This chain is UDP-N-acetylmuramate--L-alanine ligase, found in Rhodopseudomonas palustris (strain HaA2).